The chain runs to 388 residues: S-adenosylmethionine synthase (388 aa).

His-17 contributes to the ATP binding site. A Mg(2+)-binding site is contributed by Asp-19. Residue Glu-45 coordinates K(+). L-methionine is bound by residues Glu-58 and Gln-101. The interval 101–111 is flexible loop; it reads QSPDIGQGVDT. Residues 160–162, 226–227, Asp-235, 241–242, Ala-258, and Lys-262 each bind ATP; these read DGK, RF, and RK. Asp-235 lines the L-methionine pocket. Position 266 (Lys-266) interacts with L-methionine.

This sequence belongs to the AdoMet synthase family. Homotetramer; dimer of dimers. Requires Mg(2+) as cofactor. The cofactor is K(+).

The protein localises to the cytoplasm. The catalysed reaction is L-methionine + ATP + H2O = S-adenosyl-L-methionine + phosphate + diphosphate. It participates in amino-acid biosynthesis; S-adenosyl-L-methionine biosynthesis; S-adenosyl-L-methionine from L-methionine: step 1/1. Catalyzes the formation of S-adenosylmethionine (AdoMet) from methionine and ATP. The overall synthetic reaction is composed of two sequential steps, AdoMet formation and the subsequent tripolyphosphate hydrolysis which occurs prior to release of AdoMet from the enzyme. In Anaeromyxobacter sp. (strain K), this protein is S-adenosylmethionine synthase.